Here is a 237-residue protein sequence, read N- to C-terminus: Early nodulin-like protein 1 (237 aa).

The N-terminal stretch at 1-28 is a signal peptide; the sequence is MEASRRWPYAAWFMAVLGLVAVFSSSEA. The 106-residue stretch at 29–134 folds into the Phytocyanin domain; the sequence is YVFYAGGRDG…GQKLYIIVMA (106 aa). Asparagine 59 carries N-linked (GlcNAc...) asparagine glycosylation. Residues cysteine 85 and cysteine 122 are joined by a disulfide bond. The segment at 139 to 215 is disordered; that stretch reads KPSEAPEPAG…SLGAPPPTSG (77 aa). Composition is skewed to low complexity over residues 140–152 and 201–215; these read PSEA…AAGP and MSRS…PTSG. Serine 206 carries GPI-anchor amidated serine lipidation. Residues 207–237 constitute a propeptide, removed in mature form; that stretch reads LGAPPPTSGAAGLAGVVASVVVGVLGALLMF.

Belongs to the early nodulin-like (ENODL) family. Expressed ubiquitously. Accumulates particularly in reproductive tissues, especially in maturing seeds.

It localises to the vacuole. The protein localises to the aleurone grain membrane. In terms of biological role, may act as a carbohydrate transporter. This chain is Early nodulin-like protein 1, found in Oryza sativa subsp. japonica (Rice).